The sequence spans 205 residues: Thiamine-phosphate synthase (205 aa).

4-amino-2-methyl-5-(diphosphooxymethyl)pyrimidine is bound by residues 37-41 (QVREK) and Asn-69. Mg(2+) contacts are provided by Asp-70 and Asp-89. Ser-108 contributes to the 4-amino-2-methyl-5-(diphosphooxymethyl)pyrimidine binding site. 134 to 136 (TGS) provides a ligand contact to 2-[(2R,5Z)-2-carboxy-4-methylthiazol-5(2H)-ylidene]ethyl phosphate. Lys-137 provides a ligand contact to 4-amino-2-methyl-5-(diphosphooxymethyl)pyrimidine. 2-[(2R,5Z)-2-carboxy-4-methylthiazol-5(2H)-ylidene]ethyl phosphate is bound by residues Gly-165 and 185 to 186 (IS).

The protein belongs to the thiamine-phosphate synthase family. Mg(2+) is required as a cofactor.

It carries out the reaction 2-[(2R,5Z)-2-carboxy-4-methylthiazol-5(2H)-ylidene]ethyl phosphate + 4-amino-2-methyl-5-(diphosphooxymethyl)pyrimidine + 2 H(+) = thiamine phosphate + CO2 + diphosphate. The enzyme catalyses 2-(2-carboxy-4-methylthiazol-5-yl)ethyl phosphate + 4-amino-2-methyl-5-(diphosphooxymethyl)pyrimidine + 2 H(+) = thiamine phosphate + CO2 + diphosphate. It catalyses the reaction 4-methyl-5-(2-phosphooxyethyl)-thiazole + 4-amino-2-methyl-5-(diphosphooxymethyl)pyrimidine + H(+) = thiamine phosphate + diphosphate. It participates in cofactor biosynthesis; thiamine diphosphate biosynthesis; thiamine phosphate from 4-amino-2-methyl-5-diphosphomethylpyrimidine and 4-methyl-5-(2-phosphoethyl)-thiazole: step 1/1. Its function is as follows. Condenses 4-methyl-5-(beta-hydroxyethyl)thiazole monophosphate (THZ-P) and 2-methyl-4-amino-5-hydroxymethyl pyrimidine pyrophosphate (HMP-PP) to form thiamine monophosphate (TMP). This Clostridium botulinum (strain Loch Maree / Type A3) protein is Thiamine-phosphate synthase.